We begin with the raw amino-acid sequence, 452 residues long: Probable 1,4-beta-D-glucan cellobiohydrolase A (452 aa).

The first 17 residues, 1–17 (MHQRALLFSALAVAANA), serve as a signal peptide directing secretion. N81 is a glycosylation site (N-linked (GlcNAc...) asparagine). E226 functions as the Nucleophile in the catalytic mechanism. The active-site Proton donor is E231. An N-linked (GlcNAc...) asparagine glycan is attached at N284. The tract at residues 406–432 (DPSKPGVARGTCEHGAGDPEKVESQHP) is disordered. Over residues 416–431 (TCEHGAGDPEKVESQH) the composition is skewed to basic and acidic residues.

Belongs to the glycosyl hydrolase 7 (cellulase C) family.

It is found in the secreted. It catalyses the reaction Hydrolysis of (1-&gt;4)-beta-D-glucosidic linkages in cellulose and cellotetraose, releasing cellobiose from the non-reducing ends of the chains.. Functionally, the biological conversion of cellulose to glucose generally requires three types of hydrolytic enzymes: (1) Endoglucanases which cut internal beta-1,4-glucosidic bonds; (2) Exocellobiohydrolases that cut the disaccharide cellobiose from the non-reducing end of the cellulose polymer chain; (3) Beta-1,4-glucosidases which hydrolyze the cellobiose and other short cello-oligosaccharides to glucose. The sequence is that of Probable 1,4-beta-D-glucan cellobiohydrolase A (cbhA) from Neosartorya fischeri (strain ATCC 1020 / DSM 3700 / CBS 544.65 / FGSC A1164 / JCM 1740 / NRRL 181 / WB 181) (Aspergillus fischerianus).